Reading from the N-terminus, the 177-residue chain is Large ribosomal subunit protein uL6 (177 aa).

It belongs to the universal ribosomal protein uL6 family. In terms of assembly, part of the 50S ribosomal subunit.

Functionally, this protein binds to the 23S rRNA, and is important in its secondary structure. It is located near the subunit interface in the base of the L7/L12 stalk, and near the tRNA binding site of the peptidyltransferase center. This chain is Large ribosomal subunit protein uL6, found in Rubrobacter xylanophilus (strain DSM 9941 / JCM 11954 / NBRC 16129 / PRD-1).